Here is a 159-residue protein sequence, read N- to C-terminus: Small ribosomal subunit protein uS9 (159 aa).

The protein belongs to the universal ribosomal protein uS9 family.

The polypeptide is Small ribosomal subunit protein uS9 (Beijerinckia indica subsp. indica (strain ATCC 9039 / DSM 1715 / NCIMB 8712)).